Here is a 266-residue protein sequence, read N- to C-terminus: Sec-independent protein translocase protein TatC (266 aa).

Transmembrane regions (helical) follow at residues M28 to F48, F93 to F113, G134 to L154, L183 to F203, H221 to T241, and I242 to V262.

Belongs to the TatC family. In terms of assembly, forms a complex with TatA.

Its subcellular location is the cell inner membrane. In terms of biological role, part of the twin-arginine translocation (Tat) system that transports large folded proteins containing a characteristic twin-arginine motif in their signal peptide across membranes. The polypeptide is Sec-independent protein translocase protein TatC (Blattabacterium sp. subsp. Periplaneta americana (strain BPLAN) (Periplaneta americana symbiotic bacterium)).